We begin with the raw amino-acid sequence, 132 residues long: Small ribosomal subunit protein uS11 (132 aa).

The protein belongs to the universal ribosomal protein uS11 family. In terms of assembly, part of the 30S ribosomal subunit. Interacts with proteins S7 and S18. Binds to IF-3.

Located on the platform of the 30S subunit, it bridges several disparate RNA helices of the 16S rRNA. Forms part of the Shine-Dalgarno cleft in the 70S ribosome. The polypeptide is Small ribosomal subunit protein uS11 (Chlamydia trachomatis serovar L2 (strain ATCC VR-902B / DSM 19102 / 434/Bu)).